The following is a 720-amino-acid chain: Replication restart protein PriA (720 aa).

A Helicase ATP-binding domain is found at 200–366 (ILMKNCFTSW…LHKKCFYIKF (167 aa)). 213–220 (KNNFYLKV) lines the ATP pocket. A DEAH box motif is present at residues 309–312 (NQEH). Residues Cys-425, Cys-428, Cys-434, Cys-437, Cys-452, Cys-455, Cys-465, and Cys-468 each coordinate Zn(2+).

The protein belongs to the helicase family. PriA subfamily. Component of the replication restart primosome. Zn(2+) is required as a cofactor.

The catalysed reaction is Couples ATP hydrolysis with the unwinding of duplex DNA by translocating in the 3'-5' direction.. The enzyme catalyses ATP + H2O = ADP + phosphate + H(+). Its function is as follows. Initiates the restart of stalled replication forks, which reloads the replicative helicase on sites other than the origin of replication. Recognizes and binds to abandoned replication forks and remodels them to uncover a helicase loading site. Promotes assembly of the primosome at these replication forks. This Buchnera aphidicola subsp. Schizaphis graminum (strain Sg) protein is Replication restart protein PriA.